The chain runs to 262 residues: Phosphonates import ATP-binding protein PhnC (262 aa).

The 249-residue stretch at 5–253 (IRVEKLAKTF…RFDHLYRSIN (249 aa)) folds into the ABC transporter domain. 37–44 (GPSGSGKS) provides a ligand contact to ATP.

It belongs to the ABC transporter superfamily. Phosphonates importer (TC 3.A.1.9.1) family. In terms of assembly, the complex is composed of two ATP-binding proteins (PhnC), two transmembrane proteins (PhnE) and a solute-binding protein (PhnD).

It is found in the cell inner membrane. It catalyses the reaction phosphonate(out) + ATP + H2O = phosphonate(in) + ADP + phosphate + H(+). Its function is as follows. Part of the ABC transporter complex PhnCDE involved in phosphonates import. Responsible for energy coupling to the transport system. This chain is Phosphonates import ATP-binding protein PhnC, found in Shigella dysenteriae serotype 1 (strain Sd197).